The sequence spans 207 residues: MVAQAAPPAGTAGQGTHEAASAAHGAAAAHGAAEEGHGKKSHFPPFDATTFASQLLWLVLSFGLLYLLMSRVALPRIGRILEERHDRIADDLEEAAKHKAESEAAQASYEKALAEARAKANAIAGETRNRLAADSEANRKSLEAGLAVKLATAEQSIASTKTEALTHVRGIAVDATHAIVSTLIGSSPAQSDVEKAVDVALVKKDAA.

Positions 1–31 (MVAQAAPPAGTAGQGTHEAASAAHGAAAAHG) are enriched in low complexity. A disordered region spans residues 1-41 (MVAQAAPPAGTAGQGTHEAASAAHGAAAAHGAAEEGHGKKS). A helical transmembrane segment spans residues 48–70 (ATTFASQLLWLVLSFGLLYLLMS).

It belongs to the ATPase B chain family. F-type ATPases have 2 components, F(1) - the catalytic core - and F(0) - the membrane proton channel. F(1) has five subunits: alpha(3), beta(3), gamma(1), delta(1), epsilon(1). F(0) has three main subunits: a(1), b(2) and c(10-14). The alpha and beta chains form an alternating ring which encloses part of the gamma chain. F(1) is attached to F(0) by a central stalk formed by the gamma and epsilon chains, while a peripheral stalk is formed by the delta and b chains.

It is found in the cell inner membrane. Its function is as follows. F(1)F(0) ATP synthase produces ATP from ADP in the presence of a proton or sodium gradient. F-type ATPases consist of two structural domains, F(1) containing the extramembraneous catalytic core and F(0) containing the membrane proton channel, linked together by a central stalk and a peripheral stalk. During catalysis, ATP synthesis in the catalytic domain of F(1) is coupled via a rotary mechanism of the central stalk subunits to proton translocation. In terms of biological role, component of the F(0) channel, it forms part of the peripheral stalk, linking F(1) to F(0). This Xanthobacter autotrophicus (strain ATCC BAA-1158 / Py2) protein is ATP synthase subunit b 2.